Consider the following 557-residue polypeptide: E3 ubiquitin-protein ligase rnf168 (557 aa).

The RING-type zinc finger occupies 16–55 (CPICQEILLEPVTLPCKHTLCNPCFQMTVEKASLCCPFCR). An LR motif 1 motif is present at residues 112 to 130 (LCQPGEIRQEYEAEVSKIE). The UMI motif signature appears at 145–153 (EDYIQKLLA). 2 consecutive short sequence motifs (MIU motif) follow at residues 170-193 (MEEQLKIDEELARTLSVDLDVSNA) and 422-445 (RRRQEEQDRLLALQLQRELDKELK). Positions 449 to 460 (RGKGSPDEYELR) match the LR motif 2 motif. Residues 482–543 (PLRKEIPVQD…GINVLKPINK (62 aa)) are disordered. Residues 490–500 (QDNSRNTQSEY) are compositionally biased toward polar residues. Positions 508–521 (PSRKNSVRSARVRQ) are enriched in basic residues.

It belongs to the RNF168 family. In terms of assembly, monomer.

The protein resides in the nucleus. The catalysed reaction is S-ubiquitinyl-[E2 ubiquitin-conjugating enzyme]-L-cysteine + [acceptor protein]-L-lysine = [E2 ubiquitin-conjugating enzyme]-L-cysteine + N(6)-ubiquitinyl-[acceptor protein]-L-lysine.. It participates in protein modification; protein ubiquitination. Functionally, E3 ubiquitin-protein ligase required for accumulation of repair proteins to sites of DNA damage. Acts with ube2n/ubc13 to amplify the rnf8-dependent histone ubiquitination. Recruited to sites of DNA damage at double-strand breaks (DSBs) by binding to ubiquitinated histone H2A and ubiquitinates histone H2A and H2AX, leading to amplify the rnf8-dependent H2A ubiquitination and promoting the formation of 'Lys-63'-linked ubiquitin conjugates. This leads to concentrate ubiquitinated histones H2A and H2AX at DNA lesions to the threshold required for recruitment of tp53bp1 and brca1. Catalyzes monoubiquitination of 'Lys-13' and 'Lys-15' of nucleosomal histone H2A (H2AK13Ub and H2AK15Ub, respectively). This Xenopus laevis (African clawed frog) protein is E3 ubiquitin-protein ligase rnf168.